Consider the following 564-residue polypeptide: Ell-associated factor Eaf (564 aa).

Disordered stretches follow at residues 179–255 (SGPG…MITD) and 270–564 (QANI…DDDD). Residues 186–205 (ENSTMRVSSKTKVSTGSRRN) show a composition bias toward polar residues. Position 215 is a phosphoserine (S215). Residues 274–283 (SGSSTGSSSG) are compositionally biased toward low complexity. Positions 297 to 309 (GKQRQAHGKRQQI) are enriched in basic residues. Composition is skewed to low complexity over residues 315 to 329 (PPVQQQPHYQQQQQP), 343 to 387 (QQQQ…QQRP), and 409 to 420 (ASQSVAQAAAVL). A compositionally biased stretch (acidic residues) spans 438 to 453 (DSSDSDSGSDSDDSTE). Low complexity-rich tracts occupy residues 463 to 505 (EQQQ…NQLP), 523 to 533 (QQPQPQPQQQQ), and 546 to 564 (NDLLQNDLQLSSNSSDDDD).

It belongs to the EAF family.

It is found in the nucleus. Its function is as follows. Promotes transcriptional elongation by Su(Tpl)/ELL. Essential for development. The polypeptide is Ell-associated factor Eaf (Drosophila pseudoobscura pseudoobscura (Fruit fly)).